Consider the following 137-residue polypeptide: Cucumber peeling cupredoxin (137 aa).

Gln-1 carries the post-translational modification Pyrrolidone carboxylic acid. The Phytocyanin domain occupies 3–107 (TVHIVGDNTG…GQKLSINVVA (105 aa)). Residues His-46, Cys-89, His-94, and Gln-99 each coordinate Cu cation. An intrachain disulfide couples Cys-60 to Cys-95. The N-linked (GlcNAc...) asparagine glycan is linked to Asn-109. The interval 112-137 (VSMPPPSSSPPSSVMPPPVMPPPSPS) is disordered. The segment covering 114-137 (MPPPSSSPPSSVMPPPVMPPPSPS) has biased composition (pro residues). 4-hydroxyproline; partial is present on Pro-115. 4 positions are modified to 4-hydroxyproline: Pro-116, Pro-117, Pro-121, and Pro-122. The residue at position 127 (Pro-127) is a 4-hydroxyproline; partial. A 4-hydroxyproline mark is found at Pro-128, Pro-129, Pro-133, Pro-134, and Pro-136.

This is Cucumber peeling cupredoxin from Cucumis sativus (Cucumber).